A 161-amino-acid chain; its full sequence is ATP synthase subunit b 1 (161 aa).

Residues 3-23 (LDATFYALVGLILFFVLIAYL) traverse the membrane as a helical segment.

The protein belongs to the ATPase B chain family. As to quaternary structure, F-type ATPases have 2 components, F(1) - the catalytic core - and F(0) - the membrane proton channel. F(1) has five subunits: alpha(3), beta(3), gamma(1), delta(1), epsilon(1). F(0) has three main subunits: a(1), b(2) and c(10-14). The alpha and beta chains form an alternating ring which encloses part of the gamma chain. F(1) is attached to F(0) by a central stalk formed by the gamma and epsilon chains, while a peripheral stalk is formed by the delta and b chains.

It localises to the cell inner membrane. In terms of biological role, f(1)F(0) ATP synthase produces ATP from ADP in the presence of a proton or sodium gradient. F-type ATPases consist of two structural domains, F(1) containing the extramembraneous catalytic core and F(0) containing the membrane proton channel, linked together by a central stalk and a peripheral stalk. During catalysis, ATP synthesis in the catalytic domain of F(1) is coupled via a rotary mechanism of the central stalk subunits to proton translocation. Its function is as follows. Component of the F(0) channel, it forms part of the peripheral stalk, linking F(1) to F(0). The protein is ATP synthase subunit b 1 of Sinorhizobium medicae (strain WSM419) (Ensifer medicae).